Consider the following 600-residue polypeptide: MSMRTEYCGLVTEHLLGQTVSLCGWVQRRRDHGGVIFIDLRDREGLVQVVCDPDRAEMFATAEGVRNEFCVQIKGLVRNRPEGTVNAGLKSGKIEVLCHELNVLNASVTPPFQLDDDNLSETTRLTHRVLDLRRPQMQHNLRLRYRVAIEARKYLDEQGFIDIETPMLTKSTPEGARDYLVPSRVNAGQFFALPQSPQLFKQLLMVANFDRYYQITKCFRDEDLRADRQPEFTQIDCETSFLGEQEIRDLFEDMIRHIFKTTIDVELDAKFPVMPYSEAMARFGSDKPDLRVQLEFTELTDAMKDVDFKVFSTPANAKDGRVAALRVPKGGELSRGDIDGYTEFVRIYGAKGLAWIKVNEKAKGRDGLQSPIVKNLHDASIAAILERTGAEDGDIIFFAADRAKVVNDSLGALRLKIGHSEFGKANGLVQAGWKPLWVVDFPMFEYDDEDARYVAAHHPFTSPKDEHLEYLETDPGRCLAKAYDMVLNGWEIGGGSVRIHREEVQSKVFRALKIGAEEAQAKFGFLLDALQYGAPPHGGIAFGLDRIVTMMAGADSIRDVIAFPKTQRAQDLLTQAPSPVDERQLRELHIRLRQPEQPKA.

Position 174 (Glu-174) interacts with L-aspartate. The tract at residues 198-201 (QLFK) is aspartate. Arg-220 is an L-aspartate binding site. Residues 220–222 (RDE) and Gln-229 contribute to the ATP site. His-457 contacts L-aspartate. ATP is bound at residue Glu-491. Position 498 (Arg-498) interacts with L-aspartate. ATP is bound at residue 543–546 (GLDR).

The protein belongs to the class-II aminoacyl-tRNA synthetase family. Type 1 subfamily. As to quaternary structure, homodimer.

Its subcellular location is the cytoplasm. It catalyses the reaction tRNA(Asx) + L-aspartate + ATP = L-aspartyl-tRNA(Asx) + AMP + diphosphate. Functionally, aspartyl-tRNA synthetase with relaxed tRNA specificity since it is able to aspartylate not only its cognate tRNA(Asp) but also tRNA(Asn). Reaction proceeds in two steps: L-aspartate is first activated by ATP to form Asp-AMP and then transferred to the acceptor end of tRNA(Asp/Asn). This Burkholderia cenocepacia (strain ATCC BAA-245 / DSM 16553 / LMG 16656 / NCTC 13227 / J2315 / CF5610) (Burkholderia cepacia (strain J2315)) protein is Aspartate--tRNA(Asp/Asn) ligase.